The primary structure comprises 307 residues: 2-phospho-L-lactate transferase (307 aa).

Residues Asp-48 and Lys-87 each contribute to the 7,8-didemethyl-8-hydroxy-5-deazariboflavin site.

This sequence belongs to the CofD family. As to quaternary structure, homodimer. Mg(2+) serves as cofactor.

The enzyme catalyses (2S)-lactyl-2-diphospho-5'-guanosine + 7,8-didemethyl-8-hydroxy-5-deazariboflavin = oxidized coenzyme F420-0 + GMP + H(+). Its pathway is cofactor biosynthesis; coenzyme F420 biosynthesis. In terms of biological role, catalyzes the transfer of the 2-phospholactate moiety from (2S)-lactyl-2-diphospho-5'-guanosine to 7,8-didemethyl-8-hydroxy-5-deazariboflavin (FO) with the formation of oxidized coenzyme F420-0 and GMP. The protein is 2-phospho-L-lactate transferase of Methanosarcina acetivorans (strain ATCC 35395 / DSM 2834 / JCM 12185 / C2A).